A 198-amino-acid chain; its full sequence is Auxin-binding protein 1 (198 aa).

A signal peptide spans 1–33 (MIVLSVGSASSSPIVVVFSVALLLFYFSETSLG). The cysteines at positions 36 and 189 are disulfide-linked. H92, H94, and E98 together coordinate Zn(2+). N130 carries an N-linked (GlcNAc...) asparagine glycan. H141 contributes to the Zn(2+) binding site. The Prevents secretion from ER motif lies at 195–198 (KDEL).

As to quaternary structure, homodimer. May interact with the GPI-anchored plasma membrane protein SKU5 and its family members. Interacts with TMK1 (via extracellular domain). In terms of processing, glycosylated. Post-translationally, ubiquitinated by RMA2, leading to proteasomal degradation.

The protein resides in the endoplasmic reticulum lumen. Its subcellular location is the cell membrane. Functionally, auxin receptor that controls cell elongation and cell division. Involved in embryonic morphogenesis. Acts on the cell cycle, endocycle, cell plate formation, and cell expansion and contributes to the control of auxin-related gene expression. Controls root meristem size and mediates auxin responsiveness. Involved in activation of ROP GTPases in response to auxin and regulation of clathrin-mediated endocytosis in roots. Acts as a positive factor in clathrin recruitment to the plasma membrane, thereby promoting endocytosis. Upon auxin binding, restricts the internalization of PIN proteins by inhibiting clathrin-mediated endocytosis. Promotes auxin-triggered phosphorylation status modulation of RAF-like kinases (e.g. RAF20 and RAF24). Involved in the regulation of polar auxin transport. Behaves as a negative regulator of the SCF(TIR1/AFB) signaling pathway, protecting AUX/IAA repressors from degradation. Regulates the expression of cell wall remodeling genes via an SCF(TIR1/AFB)-dependent pathway. Involved in the modulation of hemicellulose xyloglucan structure. Required for rapid auxin-mediated re-orientation of microtubules to regulate cell elongation in roots and dark-grown hypocotyls as well as asymmetric growth during gravitropic responses. Involved in the shade avoidance response. Forms with TMK1 a cell surface auxin perception complex that activates ROP signaling pathways. ABP1 sensing of auxin is important for the ABP1-TMK1 complex formation. Interacts functionally with phytochrome to regulate growth. The sequence is that of Auxin-binding protein 1 from Arabidopsis thaliana (Mouse-ear cress).